Reading from the N-terminus, the 758-residue chain is Spastin (758 aa).

The segment at 1–103 (MVRTKNQSSS…SPRSGHHHSY (103 aa)) is disordered. Over 1–121 (MVRTKNQSSS…KQNLYVVSFP (121 aa)) the chain is Cytoplasmic. The interaction with atl stretch occupies residues 1 to 159 (MVRTKNQSSS…VIYRPHRRDC (159 aa)). The interval 1–210 (MVRTKNQSSS…RPIQPLEMAA (210 aa)) is required for localization to punctate cytoplasmic foci. 4 stretches are compositionally biased toward low complexity: residues 8–28 (SSSS…SSGA), 43–58 (RSSS…AGGS), 66–76 (SSNRRSPGSSP), and 85–95 (TDDLTPTTCSP). Positions 122–142 (IIFLFNVLRSLIYQLFCIFRY) form an intramembrane region, helical. Residues 143-758 (LYGASTKVIY…WSQDYGDITI (616 aa)) lie on the Cytoplasmic side of the membrane. 2 stretches are compositionally biased toward polar residues: residues 169–180 (SKEQQQSLNHPS) and 189–198 (QEQQLSNQPQ). Residues 169–202 (SKEQQQSLNHPSELNREGDGQEQQLSNQPQRFRP) are disordered. Residues 208–758 (MAANRPGGGY…WSQDYGDITI (551 aa)) are sufficient for interaction with microtubules and microtubule severing. An MIT domain is found at 233-308 (HRRAFEYISK…SMARDRLHFL (76 aa)). Positions 353–454 (RVRSSGYGPK…GPSGSGASTP (102 aa)) are disordered. Polar residues-rich tracts occupy residues 390–406 (NKSQ…TSVG) and 425–454 (QFSS…ASTP). T439 carries the post-translational modification Phosphothreonine. The interval 443–455 (NNGPSGSGASTPV) is required for interaction with microtubules. 523–530 (GPPGNGKT) contacts ATP.

Belongs to the AAA ATPase family. Spastin subfamily. In terms of assembly, homohexamer. The homohexamer is stabilized by ATP-binding. The homohexamer may adopt a ring conformation through which microtubules pass prior to being severed. Interacts with microtubules. Interacts with atl; may be involved in microtubule dynamics.

It is found in the membrane. Its subcellular location is the cytoplasm. The protein localises to the cytoskeleton. It localises to the microtubule organizing center. The protein resides in the centrosome. It is found in the chromosome. Its subcellular location is the lipid droplet. The catalysed reaction is n ATP + n H2O + a microtubule = n ADP + n phosphate + (n+1) alpha/beta tubulin heterodimers.. Functionally, ATP-dependent microtubule severing protein. Stimulates microtubule minus-end depolymerization and poleward microtubule flux in the mitotic spindle. Regulates microtubule stability in the neuromuscular junction synapse. Involved in lipid metabolism by regulating the size and distribution of lipid droplets. Involved in axon regeneration by regulating microtubule severing. The protein is Spastin of Drosophila melanogaster (Fruit fly).